The chain runs to 203 residues: Holliday junction branch migration complex subunit RuvA (203 aa).

The interval 1-63 (MIGKLSGKVD…EEHMHLYGFL (63 aa)) is domain I. The segment at 64 to 142 (TLEEKIFFNL…KISSGSAIIK (79 aa)) is domain II. Residues 143-149 (ESLNIKN) form a flexible linker region. A domain III region spans residues 150-203 (ITPVASNEVIKALVNLGFSRFEAQNAVQGIITQNPEISIDELIKTALKNRNSNF).

The protein belongs to the RuvA family. In terms of assembly, homotetramer. Forms an RuvA(8)-RuvB(12)-Holliday junction (HJ) complex. HJ DNA is sandwiched between 2 RuvA tetramers; dsDNA enters through RuvA and exits via RuvB. An RuvB hexamer assembles on each DNA strand where it exits the tetramer. Each RuvB hexamer is contacted by two RuvA subunits (via domain III) on 2 adjacent RuvB subunits; this complex drives branch migration. In the full resolvosome a probable DNA-RuvA(4)-RuvB(12)-RuvC(2) complex forms which resolves the HJ.

It is found in the cytoplasm. The RuvA-RuvB-RuvC complex processes Holliday junction (HJ) DNA during genetic recombination and DNA repair, while the RuvA-RuvB complex plays an important role in the rescue of blocked DNA replication forks via replication fork reversal (RFR). RuvA specifically binds to HJ cruciform DNA, conferring on it an open structure. The RuvB hexamer acts as an ATP-dependent pump, pulling dsDNA into and through the RuvAB complex. HJ branch migration allows RuvC to scan DNA until it finds its consensus sequence, where it cleaves and resolves the cruciform DNA. This chain is Holliday junction branch migration complex subunit RuvA, found in Rickettsia peacockii (strain Rustic).